A 526-amino-acid chain; its full sequence is NAD(P)H-quinone oxidoreductase chain 4 2 (526 aa).

The next 14 membrane-spanning stretches (helical) occupy residues 6–26, 36–56, 91–111, 113–133, 137–157, 169–189, 212–232, 243–263, 275–295, 306–326, 332–352, 375–397, 417–437, and 464–484; these read FPWLSTIILFPIIAALFLPLI, WYALTIGLIDFVIIVTAFYTG, LILLTGFITTLAILAAWPVSF, PKLFYFLMLLMYGGQIAVFAV, LLFFFTWELELVPVYLILSIW, FILYTAGGSLFILIAALTMAF, LLLYGGLLIAYGVKLPIFPLH, TAPAHMLLAGILLKMGGYALL, ALFGPVLVILGVVNIVYAALT, IAYSSISHMGFVLIGMASFTD, AMLQMISHGLIGASLFFMVGA, IFAMWTTCSMASLALPGMSGFVA, VIIVFLAAVGVILTPIYLLSM, and VFVIACLLIPIIGIGLYPKAV.

Belongs to the complex I subunit 4 family.

It is found in the cellular thylakoid membrane. The catalysed reaction is a plastoquinone + NADH + (n+1) H(+)(in) = a plastoquinol + NAD(+) + n H(+)(out). It carries out the reaction a plastoquinone + NADPH + (n+1) H(+)(in) = a plastoquinol + NADP(+) + n H(+)(out). NDH-1 shuttles electrons from NAD(P)H, via FMN and iron-sulfur (Fe-S) centers, to quinones in the respiratory chain. The immediate electron acceptor for the enzyme in this species is believed to be plastoquinone. Couples the redox reaction to proton translocation (for every two electrons transferred, four hydrogen ions are translocated across the cytoplasmic membrane), and thus conserves the redox energy in a proton gradient. The protein is NAD(P)H-quinone oxidoreductase chain 4 2 of Picosynechococcus sp. (strain ATCC 27264 / PCC 7002 / PR-6) (Agmenellum quadruplicatum).